The sequence spans 211 residues: Thiamine-phosphate synthase (211 aa).

Residues 37 to 41 and N69 each bind 4-amino-2-methyl-5-(diphosphooxymethyl)pyrimidine; that span reads QLRIK. 2 residues coordinate Mg(2+): D70 and D89. S108 is a 4-amino-2-methyl-5-(diphosphooxymethyl)pyrimidine binding site. 134–136 serves as a coordination point for 2-[(2R,5Z)-2-carboxy-4-methylthiazol-5(2H)-ylidene]ethyl phosphate; sequence TQT. K137 serves as a coordination point for 4-amino-2-methyl-5-(diphosphooxymethyl)pyrimidine. 2-[(2R,5Z)-2-carboxy-4-methylthiazol-5(2H)-ylidene]ethyl phosphate is bound by residues G166 and 186-187; that span reads VS.

Belongs to the thiamine-phosphate synthase family. The cofactor is Mg(2+).

It carries out the reaction 2-[(2R,5Z)-2-carboxy-4-methylthiazol-5(2H)-ylidene]ethyl phosphate + 4-amino-2-methyl-5-(diphosphooxymethyl)pyrimidine + 2 H(+) = thiamine phosphate + CO2 + diphosphate. It catalyses the reaction 2-(2-carboxy-4-methylthiazol-5-yl)ethyl phosphate + 4-amino-2-methyl-5-(diphosphooxymethyl)pyrimidine + 2 H(+) = thiamine phosphate + CO2 + diphosphate. The enzyme catalyses 4-methyl-5-(2-phosphooxyethyl)-thiazole + 4-amino-2-methyl-5-(diphosphooxymethyl)pyrimidine + H(+) = thiamine phosphate + diphosphate. Its pathway is cofactor biosynthesis; thiamine diphosphate biosynthesis; thiamine phosphate from 4-amino-2-methyl-5-diphosphomethylpyrimidine and 4-methyl-5-(2-phosphoethyl)-thiazole: step 1/1. Functionally, condenses 4-methyl-5-(beta-hydroxyethyl)thiazole monophosphate (THZ-P) and 2-methyl-4-amino-5-hydroxymethyl pyrimidine pyrophosphate (HMP-PP) to form thiamine monophosphate (TMP). The protein is Thiamine-phosphate synthase of Salmonella paratyphi B (strain ATCC BAA-1250 / SPB7).